Here is a 460-residue protein sequence, read N- to C-terminus: Chromosomal replication initiator protein DnaA (460 aa).

The tract at residues 1–84 (MAVSLWQQCI…RFDIGSRPSA (84 aa)) is domain I, interacts with DnaA modulators. Residues 84 to 123 (AKKPEPAPVAAVRVPNPQTKASVGTSFNTTEPVVNANHRS) are domain II. Positions 124–340 (NINPTYQFDN…GALNRVIANA (217 aa)) are domain III, AAA+ region. ATP-binding residues include Gly168, Gly170, Lys171, and Thr172. A domain IV, binds dsDNA region spans residues 341–460 (NFTGRPITID…YANLIRTLSS (120 aa)).

Belongs to the DnaA family. In terms of assembly, oligomerizes as a right-handed, spiral filament on DNA at oriC.

It localises to the cytoplasm. Its function is as follows. Plays an essential role in the initiation and regulation of chromosomal replication. ATP-DnaA binds to the origin of replication (oriC) to initiate formation of the DNA replication initiation complex once per cell cycle. Binds the DnaA box (a 9 base pair repeat at the origin) and separates the double-stranded (ds)DNA. Forms a right-handed helical filament on oriC DNA; dsDNA binds to the exterior of the filament while single-stranded (ss)DNA is stabiized in the filament's interior. The ATP-DnaA-oriC complex binds and stabilizes one strand of the AT-rich DNA unwinding element (DUE), permitting loading of DNA polymerase. After initiation quickly degrades to an ADP-DnaA complex that is not apt for DNA replication. Binds acidic phospholipids. The sequence is that of Chromosomal replication initiator protein DnaA from Shewanella sp. (strain MR-7).